We begin with the raw amino-acid sequence, 337 residues long: MTHQVAVLHQDKKFDVSLRPKGLEEFYGQHHLKERLDLFLCAALQRGEVPGHCLFFGPPGLGKTSLAHIVAYTVGKGLVLASGPQLIKPSDLLGLLTSLQEGDVFFIDEIHRMGKVAEEYLYSAMEDFKVDITIDSGPGARSVRVDLAPFTLVGATTRSGMLSEPLRTRFAFSARLSYYSDQDLKEILVRSSHLLGIEADSSALLEIAKRSRGTPRLANHLLRWVRDFAQIREGNCINGDVAEKALAMLLIDDWGLNEIDIKLLTTIIDYYQGGPVGIKTLSVAVGEDIKTLEDVYEPFLILKGFIKKTPRGRMVTQLAYDHLKRHAKNLLSLGEGQ.

Residues 1–179 (MTHQVAVLHQ…FAFSARLSYY (179 aa)) form a large ATPase domain (RuvB-L) region. ATP-binding positions include L18, R19, G60, K63, T64, S65, 126–128 (EDF), R169, Y179, and R216. A Mg(2+)-binding site is contributed by T64. The interval 180–250 (SDQDLKEILV…VAEKALAMLL (71 aa)) is small ATPAse domain (RuvB-S). Residues 253–337 (DWGLNEIDIK…KNLLSLGEGQ (85 aa)) form a head domain (RuvB-H) region. Residues K308 and R313 each coordinate DNA.

This sequence belongs to the RuvB family. Homohexamer. Forms an RuvA(8)-RuvB(12)-Holliday junction (HJ) complex. HJ DNA is sandwiched between 2 RuvA tetramers; dsDNA enters through RuvA and exits via RuvB. An RuvB hexamer assembles on each DNA strand where it exits the tetramer. Each RuvB hexamer is contacted by two RuvA subunits (via domain III) on 2 adjacent RuvB subunits; this complex drives branch migration. In the full resolvosome a probable DNA-RuvA(4)-RuvB(12)-RuvC(2) complex forms which resolves the HJ.

Its subcellular location is the cytoplasm. The catalysed reaction is ATP + H2O = ADP + phosphate + H(+). The RuvA-RuvB-RuvC complex processes Holliday junction (HJ) DNA during genetic recombination and DNA repair, while the RuvA-RuvB complex plays an important role in the rescue of blocked DNA replication forks via replication fork reversal (RFR). RuvA specifically binds to HJ cruciform DNA, conferring on it an open structure. The RuvB hexamer acts as an ATP-dependent pump, pulling dsDNA into and through the RuvAB complex. RuvB forms 2 homohexamers on either side of HJ DNA bound by 1 or 2 RuvA tetramers; 4 subunits per hexamer contact DNA at a time. Coordinated motions by a converter formed by DNA-disengaged RuvB subunits stimulates ATP hydrolysis and nucleotide exchange. Immobilization of the converter enables RuvB to convert the ATP-contained energy into a lever motion, pulling 2 nucleotides of DNA out of the RuvA tetramer per ATP hydrolyzed, thus driving DNA branch migration. The RuvB motors rotate together with the DNA substrate, which together with the progressing nucleotide cycle form the mechanistic basis for DNA recombination by continuous HJ branch migration. Branch migration allows RuvC to scan DNA until it finds its consensus sequence, where it cleaves and resolves cruciform DNA. This chain is Holliday junction branch migration complex subunit RuvB, found in Chlamydia pneumoniae (Chlamydophila pneumoniae).